Here is a 130-residue protein sequence, read N- to C-terminus: Small ribosomal subunit protein uS11 (130 aa).

It belongs to the universal ribosomal protein uS11 family. Part of the 30S ribosomal subunit. Interacts with proteins S7 and S18. Binds to IF-3.

Located on the platform of the 30S subunit, it bridges several disparate RNA helices of the 16S rRNA. Forms part of the Shine-Dalgarno cleft in the 70S ribosome. The chain is Small ribosomal subunit protein uS11 from Nitratiruptor sp. (strain SB155-2).